Here is a 297-residue protein sequence, read N- to C-terminus: NAC domain-containing protein 72 (297 aa).

The NAC domain occupies 14 to 162 (LPPGFRFYPT…DWVLCRIYKK (149 aa)). A DNA-binding region spans residues 111 to 168 (VGIKKALVFYAGKAPKGTKTNWIMHEYRLIEHSRSHGSSKLDDWVLCRIYKKTSGSQR). Disordered regions lie at residues 168 to 195 (RQAV…SQLD) and 259 to 278 (GEAE…LTQS). Over residues 266–277 (VNRQQNSSGLTQ) the composition is skewed to polar residues.

Expressed in leaves and in root pericycle and epidermis.

It localises to the nucleus. Transcription factors that bind specifically to the 5'-CATGTG-3' motif and with bipartite regions with 5'-CGTr-3' and 5'-YACG-3' as cores. Involved in the regulation of metabolic reprogramming during senescence by promoting the chloroplast protein degradation and the catabolism of lysine, phytol and free fatty acids via the induction of CV, LKR/SDH and PES1 expression. Also triggers the degradation of starch and the accumulation of mono- and disaccharides during senescence by enhancing the expression of AMY1, SFP1 and SWEET15. This Arabidopsis thaliana (Mouse-ear cress) protein is NAC domain-containing protein 72.